We begin with the raw amino-acid sequence, 259 residues long: 3'-5' ssDNA/RNA exonuclease TatD (259 aa).

A divalent metal cation-binding residues include E92, H128, and H153.

It belongs to the metallo-dependent hydrolases superfamily. TatD-type hydrolase family. TatD subfamily. In terms of assembly, monomer. It depends on Mg(2+) as a cofactor.

It is found in the cytoplasm. Its function is as follows. 3'-5' exonuclease that prefers single-stranded DNA and RNA. May play a role in the H(2)O(2)-induced DNA damage repair. In Erwinia amylovora (strain ATCC 49946 / CCPPB 0273 / Ea273 / 27-3), this protein is 3'-5' ssDNA/RNA exonuclease TatD.